The sequence spans 426 residues: Phosphomethylpyrimidine synthase (426 aa).

Substrate contacts are provided by residues Asn-65, Met-94, Tyr-123, His-162, 184 to 186 (SRG), 225 to 228 (DGMR), and Glu-264. A Zn(2+)-binding site is contributed by His-268. Tyr-291 provides a ligand contact to substrate. His-332 serves as a coordination point for Zn(2+). [4Fe-4S] cluster is bound by residues Cys-408, Cys-411, and Cys-415.

This sequence belongs to the ThiC family. [4Fe-4S] cluster is required as a cofactor.

The catalysed reaction is 5-amino-1-(5-phospho-beta-D-ribosyl)imidazole + S-adenosyl-L-methionine = 4-amino-2-methyl-5-(phosphooxymethyl)pyrimidine + CO + 5'-deoxyadenosine + formate + L-methionine + 3 H(+). The protein operates within cofactor biosynthesis; thiamine diphosphate biosynthesis. In terms of biological role, catalyzes the synthesis of the hydroxymethylpyrimidine phosphate (HMP-P) moiety of thiamine from aminoimidazole ribotide (AIR) in a radical S-adenosyl-L-methionine (SAM)-dependent reaction. The polypeptide is Phosphomethylpyrimidine synthase (Methanococcus maripaludis (strain C7 / ATCC BAA-1331)).